Consider the following 326-residue polypeptide: Triacylglycerol lipase 2 (326 aa).

The short motif at 142-146 is the (A/G)XSXG lipase motif element; the sequence is AHSMG.

In terms of assembly, interacts with MIA40; forms mixed disulfide intermediates with MIA40.

The protein localises to the mitochondrion. The protein resides in the mitochondrion intermembrane space. The catalysed reaction is a triacylglycerol + H2O = a diacylglycerol + a fatty acid + H(+). It catalyses the reaction 1,2,3-tri-(9Z-octadecenoyl)-glycerol + H2O = di-(9Z)-octadecenoylglycerol + (9Z)-octadecenoate + H(+). The enzyme catalyses 1,2,3-tributanoylglycerol + H2O = dibutanoylglycerol + butanoate + H(+). It carries out the reaction 1,2,3-trioctanoylglycerol + H2O = dioctanoylglycerol + octanoate + H(+). The catalysed reaction is di-(9Z)-octadecenoylglycerol + H2O = (9Z-octadecenoyl)-glycerol + (9Z)-octadecenoate + H(+). It catalyses the reaction dioctanoylglycerol + H2O = octanoylglycerol + octanoate + H(+). Its function is as follows. Mitochondrial triacylglycerol (TAG) lipase with activity toward long-chain diacylglycerols (DAGs) and triacylglycerols (TAGs). Involved in mitochondrial lipid metabolism. This Saccharomyces cerevisiae (strain ATCC 204508 / S288c) (Baker's yeast) protein is Triacylglycerol lipase 2 (TGL2).